The following is a 1592-amino-acid chain: Probable serine/threonine-protein kinase DDB_G0293958 (1592 aa).

A Protein kinase 1 domain is found at M1 to I302. ATP-binding positions include T2 to K10 and K43. The Proton acceptor role is filled by D158. Disordered regions lie at residues I348–N402, F455–N526, and K837–S867. The segment covering N349–N402 has biased composition (low complexity). Residues S461–N518 adopt a coiled-coil conformation. Positions Q486–E496 are enriched in basic and acidic residues. Composition is skewed to low complexity over residues N499–N526 and K837–N864. In terms of domain architecture, Protein kinase 2 spans L1342 to L1592. Residues I1348–I1356 and K1376 each bind ATP. Catalysis depends on D1474, which acts as the Proton acceptor.

Belongs to the protein kinase superfamily. Ser/Thr protein kinase family.

The catalysed reaction is L-seryl-[protein] + ATP = O-phospho-L-seryl-[protein] + ADP + H(+). The enzyme catalyses L-threonyl-[protein] + ATP = O-phospho-L-threonyl-[protein] + ADP + H(+). This chain is Probable serine/threonine-protein kinase DDB_G0293958, found in Dictyostelium discoideum (Social amoeba).